A 261-amino-acid polypeptide reads, in one-letter code: Potassium/proton antiporter CemA (261 aa).

2 helical membrane-spanning segments follow: residues Phe-47–Val-67 and Ile-138–Met-158.

This sequence belongs to the CemA family.

It localises to the plastid. The protein localises to the chloroplast inner membrane. The catalysed reaction is K(+)(in) + H(+)(out) = K(+)(out) + H(+)(in). In terms of biological role, contributes to K(+)/H(+) antiport activity by supporting proton efflux to control proton extrusion and homeostasis in chloroplasts in a light-dependent manner to modulate photosynthesis. Prevents excessive induction of non-photochemical quenching (NPQ) under continuous-light conditions. Indirectly promotes efficient inorganic carbon uptake into chloroplasts. The protein is Potassium/proton antiporter CemA of Ginkgo biloba (Ginkgo).